Here is an 833-residue protein sequence, read N- to C-terminus: MSRIIIKNIPRYYDKEKLSTYLKSLPQLDAEITDVSVAKTKEGVSRRFAFIGFKNEEDADKAIRYLNKSYVETSRIEVHRALDYRSANEKLRPYSKYASKNIELKLQKKEKEEELRNLEEEKAKKKKDANLKRKFLDTLDPKAREFLKLSSSISNSRSWENEEVFDTEITNPVIPADEDDDEYQDLPAAKRHEGDSIKSTEHDSTLDSGVVIDGREKSSSELHEEESEQAAEGDTAKNSGTDAQAPLSDDEWLRLHRTRIKEKQPEEEVSVVGDELKSFDKENNDEHLERVTNDKIADASMLQKAENNVSEQERNIQLISETKRLFLRNLTYSCAEDDLKSLFGPFGQLEQVHMPIDKKTNNPKGFAYIDFHDADDAVRAYLELDAKPFQGRLLHVLPAKARSSILLDDYALSKLPLKKQRELKRKNTAASSTFSWNSLYMNADAVVTSLASRLGVKKTDILDPTSSDSAVKQALTETHVIQETKNFFEEHGVDLDAFKNAARSDNVLLVKNFPYGTSAEELTSLFSPFGELGRILIPPAGTIAIIEFLNAPDCRQAFSKLAYTRIKSSILYLEKAPRDVFTTSFKQSGKPELAQKVNAVEATTSEKVGTEDIESLDTATIYVKNLNFSTKQEEFQKVFKPLEGYLSAVIRAKPDPKRPGKYLSMGFGFVEFKDKASAVAAMHAMNGFVLDGHKLEIKLSHQGVDAAAEVRKQDSSKPKGTKILIKNLPFEATKKDVQSLLGAYGQLRSVRVPKKFDRSARGFAFAEFVTAREAANAMRALKNTHLLGRHLVLQYASNATMDDMQHAIEKMAKEANAEAAAPSITGKRLIETD.

The RRM 1 domain occupies Ser-2–Asp-83. Residues Glu-160–Glu-251 are disordered. 2 stretches are compositionally biased toward basic and acidic residues: residues Ala-188 to Thr-205 and Asp-213 to Leu-222. RRM domains are found at residues Lys-323–Ala-401, Asn-506–Arg-578, Ala-619–Gln-702, and Thr-721–Asn-798.

This sequence belongs to the RRM MRD1 family.

The protein localises to the nucleus. Its function is as follows. Involved in pre-rRNA processing. In Schizosaccharomyces pombe (strain 972 / ATCC 24843) (Fission yeast), this protein is Multiple RNA-binding domain-containing protein 1 (mrd1).